Reading from the N-terminus, the 385-residue chain is Putative non-inhibitory serpin-Z11 (385 aa).

The interval 324–348 is RCL; it reads GTTAVEAMYSPSSPGYSPGYQPPRP.

This sequence belongs to the serpin family.

The polypeptide is Putative non-inhibitory serpin-Z11 (Oryza sativa subsp. japonica (Rice)).